Here is a 215-residue protein sequence, read N- to C-terminus: Cardiolipin synthase (CMP-forming) (215 aa).

Helical transmembrane passes span 29 to 49, 60 to 80, 117 to 137, 158 to 178, and 179 to 199; these read IPNI…WLIL, GWAL…GKLA, LWLT…VGIL, LMYA…ASLA, and AVFG…AGVL.

Belongs to the CDP-alcohol phosphatidyltransferase class-I family. A divalent metal cation is required as a cofactor.

It is found in the cell membrane. The catalysed reaction is a CDP-1,2-diacyl-sn-glycerol + a 1,2-diacyl-sn-glycero-3-phospho-(1'-sn-glycerol) = a cardiolipin + CMP + H(+). Functionally, catalyzes the synthesis of cardiolipin (CL) (diphosphatidylglycerol) by specifically transferring a phosphatidyl group from CDP-diacylglycerol to phosphatidylglycerol (PG). The polypeptide is Cardiolipin synthase (CMP-forming) (Streptomyces coelicolor (strain ATCC BAA-471 / A3(2) / M145)).